A 319-amino-acid polypeptide reads, in one-letter code: Beta-sarcoglycan (319 aa).

Residues Met-1–Ala-10 are compositionally biased toward low complexity. The disordered stretch occupies residues Met-1–Val-33. The Cytoplasmic segment spans residues Met-1–Ala-66. Residues Ser-22–Val-33 are compositionally biased toward basic and acidic residues. The helical; Signal-anchor for type II membrane protein transmembrane segment at Ile-67 to Ile-87 threads the bilayer. At Trp-88–Thr-318 the chain is on the extracellular side. N-linked (GlcNAc...) asparagine glycosylation is found at Asn-159, Asn-212, and Asn-259. Intrachain disulfides connect Cys-289/Cys-315 and Cys-291/Cys-308.

This sequence belongs to the sarcoglycan beta/delta/gamma/zeta family. In terms of assembly, cross-link to form 2 major subcomplexes: one consisting of SGCB, SGCD and SGCG and the other consisting of SGCB and SGCD. The association between SGCB and SGCG is particularly strong while SGCA is loosely associated with the other sarcoglycans. Post-translationally, disulfide bonds are present.

It localises to the cell membrane. Its subcellular location is the sarcolemma. The protein localises to the cytoplasm. The protein resides in the cytoskeleton. Component of the sarcoglycan complex, a subcomplex of the dystrophin-glycoprotein complex which forms a link between the F-actin cytoskeleton and the extracellular matrix. This Pongo abelii (Sumatran orangutan) protein is Beta-sarcoglycan (SGCB).